A 1333-amino-acid polypeptide reads, in one-letter code: Inner capsid protein VP1 (1333 aa).

Residues 1-10 (MHSTNNNSNK) are compositionally biased toward low complexity. Residues 1–71 (MHSTNNNSNK…QTDGTGLSGT (71 aa)) form a disordered region. Positions 11–21 (RNNEEKHKQPE) are enriched in basic and acidic residues. Positions 22–42 (IDSSANNGEGTSGTRAQTVGD) are enriched in polar residues.

This sequence belongs to the turreted BTV-fold inner capsid family. In terms of assembly, homodecamer; each decamer is made up of two conformers of VP2, called VP2A and VP2B. 12 homodecamers assemble to form an icosahedral capsid.

It localises to the virion. Functionally, inner capsid protein that self-assembles to form an icosahedral capsid with a T=2 symmetry, which consists of 120 copies of VP2, with channels at each of its five-fold vertices. This capsid constitutes the innermost concentric layer of the viral mature particle. This Bombyx mori (Silk moth) protein is Inner capsid protein VP1.